The chain runs to 1088 residues: Adenylate-forming reductase Nps10 (1088 aa).

Positions 1–22 (MSSVSIQIPLPTPPPTQAHNSQ) are disordered. Residues 38–451 (FDWHSKNSPN…KIFGRTDDQI (414 aa)) form an adenylation (A) domain region. AMP is bound by residues His261, 357–358 (NL), Thr362, and 443–446 (IFGR). A Carrier domain is found at 586–668 (AWDSAKTLGF…SLASFVSSVA (83 aa)). Ser621 bears the O-(pantetheine 4'-phosphoryl)serine mark. Residues 712–951 (LTGSTGALGS…IPVNVAAAAI (240 aa)) form a reductase (R) domain region. NADP(+) is bound by residues 716–719 (TGAL), 804–806 (NAW), Tyr875, and Lys879.

This sequence belongs to the adenylate-forming reductase family.

Adenylate-forming reductase, a natural product biosynthesis enzyme that resembles non-ribosomal peptide synthetases, yet serves to modify one substrate, rather than to condense two or more building blocks. The A-domain preferentially accepts phenylpyruvic acid and benzoic acid as substrate. The natural product of the enzyme is not yet known. The sequence is that of Adenylate-forming reductase Nps10 from Heterobasidion annosum (Root rot fungus).